A 269-amino-acid chain; its full sequence is 3-methyl-2-oxobutanoate hydroxymethyltransferase (269 aa).

Residues Asp48 and Asp87 each coordinate Mg(2+). 3-methyl-2-oxobutanoate contacts are provided by residues 48–49, Asp87, and Lys117; that span reads DS. Glu119 provides a ligand contact to Mg(2+). Glu186 acts as the Proton acceptor in catalysis.

It belongs to the PanB family. In terms of assembly, homodecamer; pentamer of dimers. Requires Mg(2+) as cofactor.

Its subcellular location is the cytoplasm. It catalyses the reaction 3-methyl-2-oxobutanoate + (6R)-5,10-methylene-5,6,7,8-tetrahydrofolate + H2O = 2-dehydropantoate + (6S)-5,6,7,8-tetrahydrofolate. It functions in the pathway cofactor biosynthesis; (R)-pantothenate biosynthesis; (R)-pantoate from 3-methyl-2-oxobutanoate: step 1/2. Catalyzes the reversible reaction in which hydroxymethyl group from 5,10-methylenetetrahydrofolate is transferred onto alpha-ketoisovalerate to form ketopantoate. This Moorella thermoacetica (strain ATCC 39073 / JCM 9320) protein is 3-methyl-2-oxobutanoate hydroxymethyltransferase.